The following is a 235-amino-acid chain: Transcriptional regulatory protein WalR (235 aa).

The Response regulatory domain occupies 4–117; that stretch reads KILVVDDEKP…ELLARVKANL (114 aa). A 4-aspartylphosphate modification is found at Asp-53. The segment at residues 132–231 is a DNA-binding region (ompR/PhoB-type); that stretch reads SNEIHIGSLV…RRGVGYYLRN (100 aa).

In terms of assembly, homodimer. In terms of processing, phosphorylated by WalK.

Its subcellular location is the cytoplasm. Functionally, member of the two-component regulatory system WalK/WalR involved in the regulation of the ftsAZ operon, the yocH, ykvT, cwlO, lytE, ydjM, yjeA, yoeB genes and the tagAB and tagDEF operons. Binds to the ftsAZ P1 promoter sequence in vitro. WalR has been shown to directly bind to the regulatory regions of yocH, ykvT, tagAB/tagDEF. Activates cwlO, lytE and ydjM and represses yoeB and yjeA. This is Transcriptional regulatory protein WalR from Bacillus subtilis (strain 168).